The following is a 216-amino-acid chain: MSKVSRDTLYEAVKEVQAGSRRKKRKFLETVELQISLKNYDPQKDKRFSGTVRLKTTPRPKFSVCVLGDQQHCDEAKAAELPHMDIEALKKLNKNKKLVKKLAKKYDAFLASESLIKQIPRILGPGLNKAGKFPSLLTHNENLGTKVDEVKSTIKFQMKKVLCLAVAVGHVKMSEEELVYNIHLAVNFLVSLLKKNWQNVRALYIKSTMGKPQRLY.

This sequence belongs to the universal ribosomal protein uL1 family. In terms of assembly, component of the large ribosomal subunit.

The protein localises to the cytoplasm. Its function is as follows. Component of the large ribosomal subunit. The ribosome is a large ribonucleoprotein complex responsible for the synthesis of proteins in the cell. In Danio rerio (Zebrafish), this protein is Large ribosomal subunit protein uL1 (rpl10a).